A 793-amino-acid chain; its full sequence is von Willebrand factor A domain-containing protein 5A (793 aa).

Positions 1 to 131 constitute a VIT domain; that stretch reads MEHHCGLITS…KVAVTLRYVQ (131 aa). The VWFA domain maps to 281–469; the sequence is EFVFLMDRSG…FALQCAVDNI (189 aa). Tyr-622 bears the Phosphotyrosine mark.

In terms of biological role, may play a role in tumorigenesis as a tumor suppressor. Altered expression of this protein and disruption of the molecular pathway it is involved in may contribute directly to or modify tumorigenesis. The sequence is that of von Willebrand factor A domain-containing protein 5A (Vwa5a) from Mus musculus (Mouse).